Here is a 356-residue protein sequence, read N- to C-terminus: Heat-inducible transcription repressor HrcA (356 aa).

Belongs to the HrcA family.

Negative regulator of class I heat shock genes (grpE-dnaK-dnaJ and groELS operons). Prevents heat-shock induction of these operons. In Chelativorans sp. (strain BNC1), this protein is Heat-inducible transcription repressor HrcA.